Consider the following 451-residue polypeptide: MSDFFHSDVLSVSELNAFAKSLLENHLAGLWIAGEVSNLTRAASGHYYFSLKDSRAQVRCAMFKGAAARLAKPLKEGDHIEVSGKISIYEARGEFQITVNEVRLKGLGQLYEAYERLKAQLQAEGAFAAERKKPLPTRPQCIGIVTSLAAAALRDVVTTLKRRAPEIPVIVYPTPVQGAGSELQIAQAIKTASQRAECDVLIVCRGGGSIEDLWAFNEEPVVRAIEACTVPVVSGVGHETDFTLADFVADVRAPTPTGAAELVSPNRQESLHRLAQAQGRLKTVLEQRYFDASQKLDWLARQIRHPRQKLDEQRASIGKLAQTLSYSMKQNLRAHTARFERQTQALQHYRPDVSVCKNNIVRLQTALPAAFSQLLTHRRQSLTAQAALLEAVSPQHILERGFSVVKNTRGQVIRNADVLKQGQKLHITFADGETDVRVSKEQGQQDLFDCI.

It belongs to the XseA family. As to quaternary structure, heterooligomer composed of large and small subunits.

It localises to the cytoplasm. The catalysed reaction is Exonucleolytic cleavage in either 5'- to 3'- or 3'- to 5'-direction to yield nucleoside 5'-phosphates.. Bidirectionally degrades single-stranded DNA into large acid-insoluble oligonucleotides, which are then degraded further into small acid-soluble oligonucleotides. This Neisseria meningitidis serogroup A / serotype 4A (strain DSM 15465 / Z2491) protein is Exodeoxyribonuclease 7 large subunit.